Here is a 207-residue protein sequence, read N- to C-terminus: MARYIGPKAKLSRREGTDLFLKSARRSLADKCKLDSKPGQHGRTSGARTSDYGTQLREKQKVKRIYGVLERQFRRYFAEADRRKGNTGENLLQLLESRLDNVVYRMGFGSTRAEARQLVSHKSITVNGVVANVPSQQVKAGDVVAIREKAKKQARIVEALSLAEQGGMPSWVAVDAKKFEGTFKQMPERAEIAGDINESLIVELYSR.

The segment at 31-55 is disordered; that stretch reads KCKLDSKPGQHGRTSGARTSDYGTQ. Residues 42–53 show a composition bias toward polar residues; it reads GRTSGARTSDYG. Positions 97-160 constitute an S4 RNA-binding domain; it reads SRLDNVVYRM…KKQARIVEAL (64 aa).

It belongs to the universal ribosomal protein uS4 family. Part of the 30S ribosomal subunit. Contacts protein S5. The interaction surface between S4 and S5 is involved in control of translational fidelity.

In terms of biological role, one of the primary rRNA binding proteins, it binds directly to 16S rRNA where it nucleates assembly of the body of the 30S subunit. With S5 and S12 plays an important role in translational accuracy. This is Small ribosomal subunit protein uS4 from Burkholderia orbicola (strain MC0-3).